The following is a 343-amino-acid chain: N-acetyl-gamma-glutamyl-phosphate reductase (343 aa).

Cys152 is a catalytic residue.

Belongs to the NAGSA dehydrogenase family. Type 1 subfamily.

The protein localises to the cytoplasm. It carries out the reaction N-acetyl-L-glutamate 5-semialdehyde + phosphate + NADP(+) = N-acetyl-L-glutamyl 5-phosphate + NADPH + H(+). Its pathway is amino-acid biosynthesis; L-arginine biosynthesis; N(2)-acetyl-L-ornithine from L-glutamate: step 3/4. In terms of biological role, catalyzes the NADPH-dependent reduction of N-acetyl-5-glutamyl phosphate to yield N-acetyl-L-glutamate 5-semialdehyde. The polypeptide is N-acetyl-gamma-glutamyl-phosphate reductase (Methanopyrus kandleri (strain AV19 / DSM 6324 / JCM 9639 / NBRC 100938)).